Consider the following 663-residue polypeptide: Transcriptional repressor CTCFL (663 aa).

A compositionally biased stretch (basic and acidic residues) spans 24 to 51 (EKGLKEEEKDGVCREKDHRSPSELEAER). 2 disordered regions span residues 24-55 (EKGL…TSGA) and 221-250 (NSNV…QRKT). C2H2-type zinc fingers lie at residues 257–279 (FHCD…MKTH), 285–307 (HLCH…VNTH), 313–336 (YKCN…RYKH), 342–364 (FKCS…VRSH), 370–392 (FQCC…MRTH), 398–421 (YECH…LQKH), 428–451 (YQCP…RNLH), 458–480 (LKCR…QKTH), 486–508 (FKCK…IRTH), and 514–537 (FTCL…RKYH). The segment at 546–568 (YKCSKCGKGFSRWINLHRHSEKC) adopts a C2H2-type 11; atypical zinc-finger fold. The segment at 569-630 (GSGEAKSAAS…STTKGEQFPG (62 aa)) is disordered. Over residues 580–590 (KGRRTRKRKQT) the composition is skewed to basic residues. Basic and acidic residues predominate over residues 594 to 607 (EATKGQKEAAKGWK). A compositionally biased stretch (low complexity) spans 608-620 (EAANGDEAAAEEA).

Belongs to the CTCF zinc-finger protein family. As to quaternary structure, interacts with histones, PRMT7 and SETD1A. Interacts (via N-terminus) with BAG6/BAT3. In terms of tissue distribution, testis specific. Specifically expressed in primary spermatocytes.

The protein resides in the cytoplasm. Its subcellular location is the nucleus. Functionally, testis-specific DNA binding protein responsible for insulator function, nuclear architecture and transcriptional control, which probably acts by recruiting epigenetic chromatin modifiers. Plays a key role in gene imprinting in male germline, by participating in the establishment of differential methylation at the IGF2/H19 imprinted control region (ICR). Directly binds the unmethylated H19 ICR and recruits the PRMT7 methyltransferase, leading to methylate histone H4 'Arg-3' to form H4R3sme2. This probably leads to recruit de novo DNA methyltransferases at these sites. Seems to act as tumor suppressor. In association with DNMT1 and DNMT3B, involved in activation of BAG1 gene expression by binding to its promoter. Required for dimethylation of H3 lysine 4 (H3K4me2) of MYC and BRCA1 promoters. In Homo sapiens (Human), this protein is Transcriptional repressor CTCFL (CTCFL).